We begin with the raw amino-acid sequence, 429 residues long: Cell cycle protein kinase spo4 (429 aa).

The Protein kinase domain maps to 40–402 (YHVVKLVGAG…KAKTALQHEF (363 aa)). ATP-binding positions include 46–54 (VGAGSFSSV) and Lys-95. Catalysis depends on Asp-182, which acts as the Proton acceptor. Thr-264 is modified (phosphothreonine).

Belongs to the protein kinase superfamily. Ser/Thr protein kinase family. CDC7 subfamily. As to quaternary structure, interacts with spo6.

It is found in the nucleus. It catalyses the reaction L-seryl-[protein] + ATP = O-phospho-L-seryl-[protein] + ADP + H(+). The catalysed reaction is L-threonyl-[protein] + ATP = O-phospho-L-threonyl-[protein] + ADP + H(+). Required for the initiation of meiosis II and progression through anaphase II. This is Cell cycle protein kinase spo4 (spo4) from Schizosaccharomyces pombe (strain 972 / ATCC 24843) (Fission yeast).